The primary structure comprises 315 residues: 4-hydroxy-3-methylbut-2-enyl diphosphate reductase (315 aa).

Position 12 (C12) interacts with [4Fe-4S] cluster. (2E)-4-hydroxy-3-methylbut-2-enyl diphosphate contacts are provided by H40 and H74. 2 residues coordinate dimethylallyl diphosphate: H40 and H74. 2 residues coordinate isopentenyl diphosphate: H40 and H74. C96 contacts [4Fe-4S] cluster. H124 lines the (2E)-4-hydroxy-3-methylbut-2-enyl diphosphate pocket. A dimethylallyl diphosphate-binding site is contributed by H124. H124 is an isopentenyl diphosphate binding site. E126 (proton donor) is an active-site residue. T167 is a (2E)-4-hydroxy-3-methylbut-2-enyl diphosphate binding site. Residue C213 participates in [4Fe-4S] cluster binding. Residues S241, S242, N243, and S290 each contribute to the (2E)-4-hydroxy-3-methylbut-2-enyl diphosphate site. Dimethylallyl diphosphate-binding residues include S241, S242, N243, and S290. Isopentenyl diphosphate is bound by residues S241, S242, N243, and S290.

It belongs to the IspH family. The cofactor is [4Fe-4S] cluster.

The catalysed reaction is isopentenyl diphosphate + 2 oxidized [2Fe-2S]-[ferredoxin] + H2O = (2E)-4-hydroxy-3-methylbut-2-enyl diphosphate + 2 reduced [2Fe-2S]-[ferredoxin] + 2 H(+). It carries out the reaction dimethylallyl diphosphate + 2 oxidized [2Fe-2S]-[ferredoxin] + H2O = (2E)-4-hydroxy-3-methylbut-2-enyl diphosphate + 2 reduced [2Fe-2S]-[ferredoxin] + 2 H(+). Its pathway is isoprenoid biosynthesis; dimethylallyl diphosphate biosynthesis; dimethylallyl diphosphate from (2E)-4-hydroxy-3-methylbutenyl diphosphate: step 1/1. It participates in isoprenoid biosynthesis; isopentenyl diphosphate biosynthesis via DXP pathway; isopentenyl diphosphate from 1-deoxy-D-xylulose 5-phosphate: step 6/6. Catalyzes the conversion of 1-hydroxy-2-methyl-2-(E)-butenyl 4-diphosphate (HMBPP) into a mixture of isopentenyl diphosphate (IPP) and dimethylallyl diphosphate (DMAPP). Acts in the terminal step of the DOXP/MEP pathway for isoprenoid precursor biosynthesis. This is 4-hydroxy-3-methylbut-2-enyl diphosphate reductase from Chloroherpeton thalassium (strain ATCC 35110 / GB-78).